The following is an 842-amino-acid chain: MGGDFRHFSSHVSLLLLFLLIVKSSSSFTPADNYLIDCGSSDETKLSDGRNFKSDQQSVAFLQTDEDIKTSVDSIPITDSNASTLPLYLTARIFAGKSTYSFYISRPGRHWIRLHFYPLNHPLYNLTNSVFSVTTDTTVLLHDFSAGDTSSIVFKEYLIYAAEKLSLYFKPHKGSTAFINAVEIVSVPDELVPDSASSVPQAPDFKGLSSFSLEILHRINIGGDLISPKIDPLSRTWLSDKPYNTFPEGSRNVTVDPSTITYPDGGATALIAPNPVYATAEEMADAQTSQPNFNLSWRMSVDFGHDYFIRLHFCDIVSKSLNDLIFNVFINKLSAISALDLSSLTSALGTAYYADFVLNASTITNGSILVQVGPTPNLQSGKPNAILNGLEIMKLNNAAGSLDGLFGVDGKYKGPIGGMSSKKLAIAGIGFVMALTAFLGVVVLLVRWQRRPKDWQKQNSFSSWLLPLHASHSSYISSKGGSTSRRMSIFGSKKSKSNGFSSFFSNQGLGRYFPFTELQTATQNFDENAVCGVGGFGKVYIGEIDGGTQVAIKRGSQSSEQGINEFQTEIQMLSKLRHRHLVSLIGFCDENKEMILVYEYMSNGPLRDHLYGSKENDPNPIPTLSWKQRLEICIGSARGLHYLHTGAAQGIIHRDVKTTNILLDENLVAKVSDFGLSKDAPMDEGHVSTAVKGSFGYLDPEYFRRQQLTDKSDVYSFGVVLFEVLCARPVINPQLPREQVNLAEYAMNLHRKGMLEKIIDPKIVGTISKGSLRKFVEAAEKCLAEYGVDRPGMGDVLWNLEYALQLQEASAQVDLSEDKTTMNIEMDLIPGEEMQSPSHSIP.

Residues 1–27 (MGGDFRHFSSHVSLLLLFLLIVKSSSS) form the signal peptide. The Extracellular segment spans residues 28-425 (FTPADNYLID…IGGMSSKKLA (398 aa)). Residues N81, N125, N252, N294, N359, and N365 are each glycosylated (N-linked (GlcNAc...) asparagine). Residues 426–446 (IAGIGFVMALTAFLGVVVLLV) form a helical membrane-spanning segment. Residues 447-842 (RWQRRPKDWQ…EMQSPSHSIP (396 aa)) lie on the Cytoplasmic side of the membrane. Positions 525 to 803 (FDENAVCGVG…GDVLWNLEYA (279 aa)) constitute a Protein kinase domain. Residues 531–539 (CGVGGFGKV) and K553 each bind ATP. Catalysis depends on D655, which acts as the Proton acceptor.

Belongs to the protein kinase superfamily. Ser/Thr protein kinase family.

It localises to the membrane. This Arabidopsis thaliana (Mouse-ear cress) protein is Probable receptor-like protein kinase At5g61350.